The primary structure comprises 257 residues: Imidazole glycerol phosphate synthase subunit HisF (257 aa).

Catalysis depends on residues aspartate 12 and aspartate 131.

Belongs to the HisA/HisF family. Heterodimer of HisH and HisF.

Its subcellular location is the cytoplasm. The catalysed reaction is 5-[(5-phospho-1-deoxy-D-ribulos-1-ylimino)methylamino]-1-(5-phospho-beta-D-ribosyl)imidazole-4-carboxamide + L-glutamine = D-erythro-1-(imidazol-4-yl)glycerol 3-phosphate + 5-amino-1-(5-phospho-beta-D-ribosyl)imidazole-4-carboxamide + L-glutamate + H(+). Its pathway is amino-acid biosynthesis; L-histidine biosynthesis; L-histidine from 5-phospho-alpha-D-ribose 1-diphosphate: step 5/9. Functionally, IGPS catalyzes the conversion of PRFAR and glutamine to IGP, AICAR and glutamate. The HisF subunit catalyzes the cyclization activity that produces IGP and AICAR from PRFAR using the ammonia provided by the HisH subunit. This Burkholderia multivorans (strain ATCC 17616 / 249) protein is Imidazole glycerol phosphate synthase subunit HisF.